The sequence spans 366 residues: MKNRILLINLGGPRDTSEIEKFLIDLFEDPLVFDLPLPEWIRKPLGKWVAKKRAPKVAQTYKSMGFGGGSPLVSETSKQANAIAKALEKITGEKWEGNITMTCGYPDIRKLNRDFLVPTKQNILLPLYPHFSRSTVLSTAKLVEQTTKFCPVSYEGWVAPFHSSQVYLESIRDLILDFFQNRLNRKDFLHSDSFQGVSNWETIDLIFSAHGIPIRLIEKGDRYREEINSNVENLKRLLYEKGFRGKCHTSFQSRVGPSKWTEPNTITMLEQLGKNGVKRVAVYPISFVSDHLETLEEIGEQLKKIAYNNGIAEYHRIPAPGIYPKFIEAMAKIGLESIQSSKNECICKKLGGHFPNLKSGECPINF.

Residues histidine 210 and glutamate 293 each contribute to the Fe cation site.

Belongs to the ferrochelatase family.

It is found in the cytoplasm. The catalysed reaction is heme b + 2 H(+) = protoporphyrin IX + Fe(2+). It functions in the pathway porphyrin-containing compound metabolism; protoheme biosynthesis; protoheme from protoporphyrin-IX: step 1/1. Catalyzes the ferrous insertion into protoporphyrin IX. In Leptospira borgpetersenii serovar Hardjo-bovis (strain L550), this protein is Ferrochelatase.